The following is a 342-amino-acid chain: Phenylalanine--tRNA ligase alpha subunit (342 aa).

Mg(2+) is bound at residue Glu257.

It belongs to the class-II aminoacyl-tRNA synthetase family. Phe-tRNA synthetase alpha subunit type 1 subfamily. As to quaternary structure, tetramer of two alpha and two beta subunits. It depends on Mg(2+) as a cofactor.

It localises to the cytoplasm. The enzyme catalyses tRNA(Phe) + L-phenylalanine + ATP = L-phenylalanyl-tRNA(Phe) + AMP + diphosphate + H(+). This is Phenylalanine--tRNA ligase alpha subunit (pheS) from Chlamydia trachomatis serovar D (strain ATCC VR-885 / DSM 19411 / UW-3/Cx).